We begin with the raw amino-acid sequence, 332 residues long: tRNA dimethylallyltransferase (332 aa).

14–21 (GPTASGKT) is a binding site for ATP. 16–21 (TASGKT) lines the substrate pocket. An interaction with substrate tRNA region spans residues 39 to 42 (DSMQ). Positions 312–332 (NKRSSNHDCKRKHPRPSTREL) are disordered. Over residues 320–332 (CKRKHPRPSTREL) the composition is skewed to basic residues.

The protein belongs to the IPP transferase family. Monomer. Mg(2+) serves as cofactor.

The enzyme catalyses adenosine(37) in tRNA + dimethylallyl diphosphate = N(6)-dimethylallyladenosine(37) in tRNA + diphosphate. Functionally, catalyzes the transfer of a dimethylallyl group onto the adenine at position 37 in tRNAs that read codons beginning with uridine, leading to the formation of N6-(dimethylallyl)adenosine (i(6)A). This Staphylococcus epidermidis (strain ATCC 35984 / DSM 28319 / BCRC 17069 / CCUG 31568 / BM 3577 / RP62A) protein is tRNA dimethylallyltransferase.